Here is a 208-residue protein sequence, read N- to C-terminus: ATP synthase subunit beta, chloroplastic (208 aa).

Belongs to the ATPase alpha/beta chains family. F-type ATPases have 2 components, CF(1) - the catalytic core - and CF(0) - the membrane proton channel. CF(1) has five subunits: alpha(3), beta(3), gamma(1), delta(1), epsilon(1). CF(0) has four main subunits: a(1), b(1), b'(1) and c(9-12).

Its subcellular location is the plastid. It is found in the chloroplast thylakoid membrane. The catalysed reaction is ATP + H2O + 4 H(+)(in) = ADP + phosphate + 5 H(+)(out). In terms of biological role, produces ATP from ADP in the presence of a proton gradient across the membrane. The catalytic sites are hosted primarily by the beta subunits. The chain is ATP synthase subunit beta, chloroplastic (atpB) from Lonchitis hirsuta (Tomato fern).